Consider the following 137-residue polypeptide: Lysozyme (137 aa).

An N-terminal signal peptide occupies residues Met-1–Ala-20. The 115-residue stretch at Thr-21–Val-135 folds into the I-type lysozyme domain. 6 cysteine pairs are disulfide-bonded: Cys-26–Cys-102, Cys-31–Cys-37, Cys-42–Cys-51, Cys-64–Cys-84, Cys-74–Cys-80, and Cys-98–Cys-116. The Proton donor role is filled by Glu-34. Asp-45 (nucleophile) is an active-site residue. Lys-57 to Asp-63 is a binding site for substrate. Substrate is bound by residues Tyr-88 and His-109–Gly-111.

This sequence belongs to the glycosyl hydrolase 22 family. Type-I lysozyme subfamily. Expressed in the basophil cells of the oyster digestive gland.

The protein resides in the secreted. The enzyme catalyses Hydrolysis of (1-&gt;4)-beta-linkages between N-acetylmuramic acid and N-acetyl-D-glucosamine residues in a peptidoglycan and between N-acetyl-D-glucosamine residues in chitodextrins.. Functionally, has bacteriolytic activity. May play a role in digestion and in the host defense mechanisms against invading microbes. The chain is Lysozyme (lysoz) from Magallana gigas (Pacific oyster).